Reading from the N-terminus, the 421-residue chain is Tryptophan synthase beta chain (421 aa).

The residue at position 110 (Lys110) is an N6-(pyridoxal phosphate)lysine.

The protein belongs to the TrpB family. Tetramer of two alpha and two beta chains. It depends on pyridoxal 5'-phosphate as a cofactor.

It catalyses the reaction (1S,2R)-1-C-(indol-3-yl)glycerol 3-phosphate + L-serine = D-glyceraldehyde 3-phosphate + L-tryptophan + H2O. The protein operates within amino-acid biosynthesis; L-tryptophan biosynthesis; L-tryptophan from chorismate: step 5/5. Functionally, the beta subunit is responsible for the synthesis of L-tryptophan from indole and L-serine. The protein is Tryptophan synthase beta chain (trpB) of Mycobacterium intracellulare.